The primary structure comprises 429 residues: WRKY transcription factor 44 (429 aa).

Positions 159–223 (TGDRSSVDGY…YQGEHNHSKP (65 aa)) form a DNA-binding region, WRKY 1. Zn(2+)-binding residues include cysteine 190, cysteine 195, histidine 218, and histidine 220. Disordered regions lie at residues 214–279 (YQGE…RTEK) and 292–348 (AVPR…SDSL). Composition is skewed to polar residues over residues 254-275 (QDPNNNLYSPLWNNQSNDSTQN), 295-313 (RSTNSNPGTSDSGCKSSQC), and 334-345 (SEAGVSQGSVES). Positions 343 to 408 (VESDSLEDGF…YEGKHNHHLL (66 aa)) form a DNA-binding region, WRKY 2. Positions 374, 379, 403, and 405 each coordinate Zn(2+). Residues 410–422 (SPPSSSTLPFNSP) are compositionally biased toward low complexity. The interval 410–429 (SPPSSSTLPFNSPQLSKQTI) is disordered.

This sequence belongs to the WRKY group I family. In terms of tissue distribution, leaf promordia, trichomes, atrichoblasts, fertilized eggs, seed coat.

It localises to the nucleus. Its function is as follows. Transcription factor. Interacts specifically with the W box (5'-(T)TGAC[CT]-3'), a frequently occurring elicitor-responsive cis-acting element. Regulates trichome development, production of mucilage and tannin in seed coats, and maybe root hair development. This chain is WRKY transcription factor 44 (WRKY44), found in Arabidopsis thaliana (Mouse-ear cress).